Reading from the N-terminus, the 86-residue chain is Photosystem I reaction center subunit PsaK (86 aa).

The next 2 helical transmembrane spans lie at 15 to 35 and 57 to 77; these read SWSI…IGLG and GLPE…GAII.

This sequence belongs to the PsaG/PsaK family.

The protein resides in the plastid. Its subcellular location is the chloroplast thylakoid membrane. The protein is Photosystem I reaction center subunit PsaK of Gracilaria tenuistipitata var. liui (Red alga).